The sequence spans 138 residues: MADDDDYQDMDNDDFVDDNEMEDVIEEEQQRPDHEEEDDDNNVDENFELFDQGKAVPTSEHVTTPFMTKYERARVLGTRALQIAMGAPVMVELEGETDPLEIARKELKQRRVPIIIRRYLPDGSYEDWPTEQLQLADW.

Composition is skewed to acidic residues over residues 1–27 (MADDDDYQDMDNDDFVDDNEMEDVIEE) and 35–46 (EEEDDDNNVDEN). The segment at 1–46 (MADDDDYQDMDNDDFVDDNEMEDVIEEEQQRPDHEEEDDDNNVDEN) is disordered.

This sequence belongs to the archaeal Rpo6/eukaryotic RPB6 RNA polymerase subunit family. Component of the RNA polymerase I (Pol I), RNA polymerase II (Pol II) and RNA polymerase III (Pol III) complexes consisting of at least 13, 12 and 17 subunits, respectively.

Its subcellular location is the nucleus. In terms of biological role, DNA-dependent RNA polymerases catalyze the transcription of DNA into RNA using the four ribonucleoside triphosphates as substrates. Common component of RNA polymerases I, II and III which synthesize ribosomal RNA precursors, mRNA precursors and many functional non-coding RNAs, and small RNAs, such as 5S rRNA and tRNAs, respectively. Pol II is the central component of the basal RNA polymerase II transcription machinery. Pols are composed of mobile elements that move relative to each other. In Pol II, RPB6 is part of the clamp element and together with parts of RPB1 and RPB2 forms a pocket to which the RPB4-RPB7 subcomplex binds. The protein is Probable DNA-directed RNA polymerases I, II, and III subunit RPABC2 of Caenorhabditis briggsae.